The chain runs to 856 residues: Envelope glycoprotein GP350 (856 aa).

Over 1–809 (MEAALLVCQY…TSQPRFSNLS (809 aa)) the chain is Virion surface. N-linked (GlcNAc...) asparagine; by host glycosylation is found at Asn-47, Asn-87, Asn-114, Asn-166, Asn-169, Asn-195, Asn-229, Asn-277, Asn-318, Asn-328, Asn-345, Asn-356, Asn-378, Asn-386, Asn-411, Asn-435, Asn-443, Asn-457, Asn-497, Asn-519, Asn-533, Asn-554, Asn-568, Asn-582, Asn-585, Asn-603, and Asn-614. The interval 421–779 (FSKAPESTTT…PPSTSSELRP (359 aa)) is disordered. The span at 427–437 (STTTSPTSNTT) shows a compositional bias: low complexity. Over residues 442-488 (PNTTTGLPSSTHVPTNLTAPASTGPTVSTADVTSPTPAGTTSGASPV) the composition is skewed to polar residues. Residues 507-570 (TSPTPAVTTP…AVTTPTPNAT (64 aa)) show a composition bias toward low complexity. Positions 575–616 (GETSPQANTTNHTLGGTSSTPVVTSQPKNATSAVTTGQHNIT) are enriched in polar residues. The segment covering 617 to 631 (SSSTSSMSLRPSSIS) has biased composition (low complexity). Residue Asn-650 is glycosylated (N-linked (GlcNAc...) asparagine; by host). The span at 654–669 (VTPASTSTHHVSTSSP) shows a compositional bias: low complexity. The segment covering 674 to 690 (GTTSQASGPGNSSTSTK) has biased composition (polar residues). Asn-684, Asn-695, Asn-704, and Asn-729 each carry an N-linked (GlcNAc...) asparagine; by host glycan. The span at 703–730 (KNATSPQAPSGQKTAVPTVTSTGGKANS) shows a compositional bias: polar residues. Low complexity predominate over residues 731 to 741 (TTGGKHTTGHG). A compositionally biased stretch (polar residues) spans 743–776 (RTSTEPTTDYGGDSTTPRTRYNATTYLPPSTSSE). N-linked (GlcNAc...) asparagine; by host glycans are attached at residues Asn-764 and Asn-807. Residues 810–830 (MLVLQWASLAVLTLLLLLVMA) traverse the membrane as a helical segment. Topologically, residues 831 to 856 (DCAFRRNLSTSHTYTTPPYDDAETYV) are intravirion.

Belongs to the Epstein-Barr GP350 family. In terms of assembly, interacts with host CR2. In terms of processing, extensively glycosylated.

The protein localises to the virion membrane. It localises to the host membrane. Its function is as follows. Initiates virion attachment to host B-lymphocyte cell, leading to virus entry. Acts by binding to host CR2 at the surface of B-lymphocytes, facilitating the binding of viral glycoprotein gp42 to HLA class II molecules. Attachment triggers virion-host membrane fusion and invasion of the host cell. This Homo sapiens (Human) protein is Envelope glycoprotein GP350.